Here is a 568-residue protein sequence, read N- to C-terminus: Fumarate hydratase 2 (568 aa).

Cysteine 133 provides a ligand contact to [4Fe-4S] cluster. (S)-malate-binding positions include glutamine 134 to aspartate 135, arginine 173, glycine 216, and asparagine 219 to glutamine 225. [4Fe-4S] cluster contacts are provided by cysteine 252 and cysteine 346. Residues arginine 421, threonine 467–arginine 471, and lysine 491 each bind (S)-malate.

It belongs to the class-I fumarase family. Homodimer. It depends on [4Fe-4S] cluster as a cofactor.

The protein resides in the cytoplasm. It is found in the cytosol. It carries out the reaction (S)-malate = fumarate + H2O. Its activity is regulated as follows. Specifically and competitively inhibited by 2-thiomalate, which coordinates with the catalytic [4Fe-4S] cluster. Weakly inhibited by malonate. Its function is as follows. Cytosolic fumarate hydratase that catalyzes the reversible hydration of fumarate to (S)-malate. The sequence is that of Fumarate hydratase 2 from Leishmania major.